The following is a 289-amino-acid chain: Release factor glutamine methyltransferase (289 aa).

S-adenosyl-L-methionine contacts are provided by residues Gly-130–Gly-134, Asp-153, Trp-182, and Asn-196. Residue Asn-196–Tyr-199 coordinates substrate.

The protein belongs to the protein N5-glutamine methyltransferase family. PrmC subfamily.

The catalysed reaction is L-glutaminyl-[peptide chain release factor] + S-adenosyl-L-methionine = N(5)-methyl-L-glutaminyl-[peptide chain release factor] + S-adenosyl-L-homocysteine + H(+). Its function is as follows. Methylates the class 1 translation termination release factors RF1/PrfA and RF2/PrfB on the glutamine residue of the universally conserved GGQ motif. The chain is Release factor glutamine methyltransferase from Agrobacterium fabrum (strain C58 / ATCC 33970) (Agrobacterium tumefaciens (strain C58)).